Reading from the N-terminus, the 519-residue chain is Histidine--tRNA ligase, cytoplasmic (519 aa).

L-histidine is bound by residues 135–137 (DLT), R162, Q178, D182, R331, and 335–336 (YY).

This sequence belongs to the class-II aminoacyl-tRNA synthetase family. In terms of assembly, homodimer.

Its subcellular location is the cytoplasm. It catalyses the reaction tRNA(His) + L-histidine + ATP = L-histidyl-tRNA(His) + AMP + diphosphate + H(+). Functionally, catalyzes the ATP-dependent ligation of histidine to the 3'-end of its cognate tRNA, via the formation of an aminoacyl-adenylate intermediate (His-AMP). Plays a role in axon guidance. The polypeptide is Histidine--tRNA ligase, cytoplasmic (hars1) (Takifugu rubripes (Japanese pufferfish)).